The primary structure comprises 1673 residues: MAQQQQQQMQQQQQHHTSSINNNNSSSIVLLQQQQPQQQQQQLDQLQQYNNNLYSQNYNMEEYERRKRREREKIERQQGIQIDDRETSLFGEPRRLTEGDAEITAALGEFFEAREYINNQTVGISRSAPGAGNPRLQPNLAPQAKSLGHSPSSASSAAGPTAASATTSLPGQQQHYQQQQRPPTYVKQADNKPPYNGRGGYPGQPMKNDIPSSSGMAPPRGPPRTSSSNSNSSSVTNNASSGGVPASTPLGPPLSTQMPNGREKSFLGPPAPALHNGTGGRFVPPAASKRPGVGQQPPPPEKDVNKIISDIANIFTVQPLTLIAATPHAPTRENYNLLAPNRQKYAMDIPSSPPSAEPSSLMTPLFAPITSPIAPLVTTPPQASQMPLGGATSGTILAGEALAPLHQLPPTMPKAASGVTSPGPVKPLKTEKNHSLEKQDSCLENDLELSESEDEQRKKEGRSGGNSSNSSESDSSESGSESSSKNDLQHHPNHQQHHHQLQQQQQQQQATMQQQQVLQQQHRSQPLTSNGAQNKKFRHEIIARGSNTITGLLSSSGFGSGGNVGPAGVNSNAVVGTGSGSGGTLSSGGSSSNKTPSPTESNKWNLSRFFHKPANQTNSESVSPGNVSMKVPGILPGGAQIIPESIDVTTAIVKNEKNDMAMEEGEEEDDDEEQQLRYGGGLSVTPVAVKKEAIDAVSEMALGAIPKTQIKRESAETLLSARLSDSGTSASGSSSSSSSSSDSAMGGEVVPMPGPGETLQLPGVPAAITTVMRVQPTQSQKAPPSNSVTLTPILPLPTSPKQRQKKPRKKKAITSAPILDSSDDDEPPPKHPGLDHTAVSVQTQPATDTVKKGRGRPRKQQQSGGSGNLSSASAGSSSQTKGPTLTAAKKPLAKTPLAMSRARKREHSSQSSSNGNTPTKKVATPQLVAAPLKPTSNTAGSSSSDEDSSSSAESSSKSSSSSSSSDDTETQNTNCRIVKLNKTGAVQKKALLGSGSSSPSSSGSEAEDQTTRSQVGSGQALAQQLPPYKQLPISQHSQHLSSSDCSSSSGGCTAVCSSSSGEEDEGRREKERERKPKSDKNKINTLTRIFNPKEGGAKKQGQVVIVDLQEEQQQGKLDAAAQPSAPQAPPAAPAAIMAKPRMTPTQQQQLGAGLASPARTTTPHLTSLICKIDLSKLSRERIMRLKKLTPAQQNGHLTPKDQATNAVHVPNGYAGDTNPAAKVKHEHPVKPEPELDAGYEAKFKPGNVKQEFQLKQERDRDRERERERERERERDREREQPPGRRRKRSSSSSSSPYKEKKRKKEKADQLQMGKELLPVPVLLPSNNHERMPNHDRLSYDKLQLLHEDAAAVIGDVSAPNGSPTKKLLAMSPLPPPPTVTVAPATCNEAVQTTPPSATATSAIAPPVPATRLIYRSYFDRDVEHPSDDPRKNNQFLQEAINRKHAADLERDSFNQVTLYLEAVVYFLLTADAMERCSSEQATNTMYKDTLSLIKFISTKFRPYQQQSTTNIQHETHNKVAILSLRCQSLISLKLYKLRRKDCRAIINSLTDFFRVGRGDIANGNTPSSISPSNSVGSQGSGSNTPPGRIVPPDIHNMLCKQNEFLSYLNSAHELWDQADRLVRTGNHIDFIRELDHENGPLTLHSTMHEVFRYVQAGLKTLRDAVSHPTHQSQ.

Disordered regions lie at residues 1-24, 54-80, 125-302, 407-534, 575-604, 722-1086, 1114-1133, 1141-1160, and 1187-1315; these read MAQQQQQQMQQQQQHHTSSINNNN, YSQNYNMEEYERRKRREREKIERQQGI, SRSA…PPEK, QLPP…GAQN, VGTGSGSGGTLSSGGSSSNKTPSPTESNKW, RLSD…INTL, QGKLDAAAQPSAPQAPPAAP, RMTPTQQQQLGAGLASPART, and KLTP…MGKE. Residues 71 to 80 are compositionally biased toward basic and acidic residues; that stretch reads REKIERQQGI. Composition is skewed to low complexity over residues 146–180 and 223–244; these read SLGHSPSSASSAAGPTAASATTSLPGQQQHYQQQQ and PRTSSSNSNSSSVTNNASSGGV. Thr-420 carries the post-translational modification Phosphothreonine. Basic and acidic residues predominate over residues 428–441; it reads LKTEKNHSLEKQDS. The segment covering 443-454 has biased composition (acidic residues); that stretch reads LENDLELSESED. Phosphoserine is present on residues Ser-450 and Ser-452. The span at 465 to 486 shows a compositional bias: low complexity; it reads GNSSNSSESDSSESGSESSSKN. Basic residues predominate over residues 491 to 500; the sequence is HPNHQQHHHQ. A compositionally biased stretch (low complexity) spans 501–525; the sequence is LQQQQQQQQATMQQQQVLQQQHRSQ. The segment covering 577 to 586 has biased composition (gly residues); sequence TGSGSGGTLS. The span at 594–604 shows a compositional bias: polar residues; the sequence is KTPSPTESNKW. Low complexity predominate over residues 724–757; that stretch reads SDSGTSASGSSSSSSSSSDSAMGGEVVPMPGPGE. A compositionally biased stretch (polar residues) spans 775–788; sequence QPTQSQKAPPSNSV. The segment covering 802-812 has biased composition (basic residues); sequence QRQKKPRKKKA. Phosphoserine occurs at positions 821 and 822. The a.T hook DNA-binding region spans 851-863; it reads KKGRGRPRKQQQS. Residues 860–898 are compositionally biased toward low complexity; the sequence is QQQSGGSGNLSSASAGSSSQTKGPTLTAAKKPLAKTPLA. Phosphoserine occurs at positions 871 and 873. Over residues 909 to 919 the composition is skewed to polar residues; it reads SQSSSNGNTPT. Low complexity-rich tracts occupy residues 949 to 965 and 993 to 1004; these read SSSAESSSKSSSSSSSS and GSGSSSPSSSGS. Residues 1011 to 1022 are compositionally biased toward polar residues; the sequence is TRSQVGSGQALA. The span at 1034-1060 shows a compositional bias: low complexity; sequence SQHSQHLSSSDCSSSSGGCTAVCSSSS. A compositionally biased stretch (basic and acidic residues) spans 1065-1082; sequence EGRREKERERKPKSDKNK. The segment covering 1190 to 1205 has biased composition (polar residues); the sequence is PAQQNGHLTPKDQATN. Composition is skewed to basic and acidic residues over residues 1226–1243 and 1252–1282; these read EHPVKPEPELDAGYEAKF and FQLKQERDRDRERERERERERERDREREQPP. The residue at position 1362 (Ser-1362) is a Phosphoserine. At Thr-1364 the chain carries Phosphothreonine. A compositionally biased stretch (low complexity) spans 1564–1583; the sequence is NTPSSISPSNSVGSQGSGSN. Residues 1564–1588 form a disordered region; that stretch reads NTPSSISPSNSVGSQGSGSNTPPGR.

Belongs to the AF4 family. In terms of assembly, component of the super elongation complex (SEC), at least composed of Ell, Cdk9, cyclin-T (CycT), lilli and ear.

The protein localises to the nucleus. Functionally, has a role in transcriptional regulation. Acts in parallel with the Ras/MAPK and the PI3K/PKB pathways in the control of cell identity and cellular growth. Essential for regulation of the cytoskeleton and cell growth but not for cell proliferation or growth rate. Required specifically for the microtubule-based basal transport of lipid droplets. Plays a partially redundant function downstream of Raf in cell fate specification in the developing eye. Pair-rule protein that regulates embryonic cellularization, gastrulation and segmentation. This Drosophila melanogaster (Fruit fly) protein is AF4/FMR2 family member lilli.